The primary structure comprises 198 residues: Dephospho-CoA kinase (198 aa).

A DPCK domain is found at 3-198; the sequence is IVGITGGIGS…LLAKERLELA (196 aa). An ATP-binding site is contributed by 11 to 16; it reads GSGKTT.

Belongs to the CoaE family.

The protein resides in the cytoplasm. The catalysed reaction is 3'-dephospho-CoA + ATP = ADP + CoA + H(+). It functions in the pathway cofactor biosynthesis; coenzyme A biosynthesis; CoA from (R)-pantothenate: step 5/5. Functionally, catalyzes the phosphorylation of the 3'-hydroxyl group of dephosphocoenzyme A to form coenzyme A. This chain is Dephospho-CoA kinase, found in Dehalococcoides mccartyi (strain ATCC BAA-2266 / KCTC 15142 / 195) (Dehalococcoides ethenogenes (strain 195)).